The sequence spans 323 residues: Putative CDC123-like protein L884 (323 aa).

The protein belongs to the CDC123 family.

This is Putative CDC123-like protein L884 from Acanthamoeba polyphaga mimivirus (APMV).